The primary structure comprises 258 residues: Ubiquinone/menaquinone biosynthesis C-methyltransferase UbiE (258 aa).

The disordered stretch occupies residues 1-21; sequence MSESRTSADGGMETSYGFREV. S-adenosyl-L-methionine is bound by residues T81, D102, and 130 to 131; that span reads NA.

This sequence belongs to the class I-like SAM-binding methyltransferase superfamily. MenG/UbiE family.

The catalysed reaction is a 2-demethylmenaquinol + S-adenosyl-L-methionine = a menaquinol + S-adenosyl-L-homocysteine + H(+). It carries out the reaction a 2-methoxy-6-(all-trans-polyprenyl)benzene-1,4-diol + S-adenosyl-L-methionine = a 5-methoxy-2-methyl-3-(all-trans-polyprenyl)benzene-1,4-diol + S-adenosyl-L-homocysteine + H(+). The protein operates within quinol/quinone metabolism; menaquinone biosynthesis; menaquinol from 1,4-dihydroxy-2-naphthoate: step 2/2. Its pathway is cofactor biosynthesis; ubiquinone biosynthesis. Functionally, methyltransferase required for the conversion of demethylmenaquinol (DMKH2) to menaquinol (MKH2) and the conversion of 2-polyprenyl-6-methoxy-1,4-benzoquinol (DDMQH2) to 2-polyprenyl-3-methyl-6-methoxy-1,4-benzoquinol (DMQH2). This is Ubiquinone/menaquinone biosynthesis C-methyltransferase UbiE from Rhizobium johnstonii (strain DSM 114642 / LMG 32736 / 3841) (Rhizobium leguminosarum bv. viciae).